The sequence spans 506 residues: RNA-splicing ligase RtcB homolog (506 aa).

Mn(2+)-binding residues include Asp-120, Cys-123, His-228, His-260, and His-354. GMP is bound at residue 227-231 (NHYAE). Residues 354 to 355 (HN), 403 to 406 (GGTM), Ser-410, 429 to 432 (HGAG), and Lys-505 each bind GMP. His-429 (GMP-histidine intermediate) is an active-site residue.

The protein belongs to the RtcB family. As to quaternary structure, catalytic component of the tRNA-splicing ligase complex. Mn(2+) serves as cofactor.

It carries out the reaction a 3'-end 3'-phospho-ribonucleotide-RNA + a 5'-end dephospho-ribonucleoside-RNA + GTP = a ribonucleotidyl-ribonucleotide-RNA + GMP + diphosphate. The enzyme catalyses a 3'-end 2',3'-cyclophospho-ribonucleotide-RNA + a 5'-end dephospho-ribonucleoside-RNA + GTP + H2O = a ribonucleotidyl-ribonucleotide-RNA + GMP + diphosphate + H(+). Its function is as follows. Catalytic subunit of the tRNA-splicing ligase complex that acts by directly joining spliced tRNA halves to mature-sized tRNAs by incorporating the precursor-derived splice junction phosphate into the mature tRNA as a canonical 3',5'-phosphodiester. May act as an RNA ligase with broad substrate specificity, and may function toward other RNAs. The chain is RNA-splicing ligase RtcB homolog from Drosophila melanogaster (Fruit fly).